The sequence spans 210 residues: Pyridoxine/pyridoxamine 5'-phosphate oxidase (210 aa).

Residues 7–10 (RDEY) and Lys65 contribute to the substrate site. Residues 60–65 (RMVLLK), 75–76 (FT), Arg81, Lys82, and Gln104 each bind FMN. The substrate site is built by Tyr122, Arg126, and Ser130. FMN-binding positions include 139–140 (QS) and Trp183. 189–191 (RLH) is a binding site for substrate. Arg193 provides a ligand contact to FMN.

This sequence belongs to the pyridoxamine 5'-phosphate oxidase family. Homodimer. Requires FMN as cofactor.

The catalysed reaction is pyridoxamine 5'-phosphate + O2 + H2O = pyridoxal 5'-phosphate + H2O2 + NH4(+). It carries out the reaction pyridoxine 5'-phosphate + O2 = pyridoxal 5'-phosphate + H2O2. The protein operates within cofactor metabolism; pyridoxal 5'-phosphate salvage; pyridoxal 5'-phosphate from pyridoxamine 5'-phosphate: step 1/1. It participates in cofactor metabolism; pyridoxal 5'-phosphate salvage; pyridoxal 5'-phosphate from pyridoxine 5'-phosphate: step 1/1. Functionally, catalyzes the oxidation of either pyridoxine 5'-phosphate (PNP) or pyridoxamine 5'-phosphate (PMP) into pyridoxal 5'-phosphate (PLP). This chain is Pyridoxine/pyridoxamine 5'-phosphate oxidase, found in Haemophilus influenzae (strain ATCC 51907 / DSM 11121 / KW20 / Rd).